We begin with the raw amino-acid sequence, 156 residues long: Large ribosomal subunit protein eL29 (156 aa).

Positions 1-26 (MAKSKNHTTHNQSRKWHRNGIKKPRS) are enriched in basic residues. Disordered stretches follow at residues 1–35 (MAKS…LKGV) and 116–156 (RRLC…VKAP). The residue at position 5 (Lys5) is an N6-methyllysine. A Phosphoserine modification is found at Ser31. Lys33 carries the post-translational modification N6-acetyllysine. 2 repeat units span residues 129–136 (AEAKAPAK) and 137–144 (AQAKAPAQ). The tract at residues 129 to 144 (AEAKAPAKAQAKAPAQ) is 2 X 8 AA tandem repeats of A-X-A-K-A-P-A-[KQ]. Positions 134-156 (PAKAQAKAPAQAPKGAQAPVKAP) are enriched in low complexity.

It belongs to the eukaryotic ribosomal protein eL29 family. Component of the large ribosomal subunit.

The protein resides in the cytoplasm. Functionally, component of the large ribosomal subunit. The ribosome is a large ribonucleoprotein complex responsible for the synthesis of proteins in the cell. The chain is Large ribosomal subunit protein eL29 (Rpl29) from Rattus norvegicus (Rat).